The primary structure comprises 114 residues: EVQLVESGGDLVKPGGSLRLSCVASGITFSGYDMQWVRQAPGKGLQKVAYFNDALSAQGYADAVKGRFTISKDNAKDSLYLQMNSLRAEDTAVYYCAPWQFEYWGQGTLVTVSS.

The Ig-like domain maps to 1–112 (EVQLVESGGD…YWGQGTLVTV (112 aa)).

The polypeptide is Ig heavy chain V region GOM (Canis lupus familiaris (Dog)).